A 125-amino-acid polypeptide reads, in one-letter code: Major intrinsically disordered NOTCH2-binding receptor 1-like (125 aa).

Asn37 carries N-linked (GlcNAc...) asparagine glycosylation. A helical transmembrane segment spans residues 100 to 120 (FAFITLFVCAVVIIITVPIVV).

It belongs to the MINAR family. Interacts with NOTCH2. Highly expressed in the auditory hair cells.

Its subcellular location is the lysosome membrane. The protein resides in the endoplasmic reticulum membrane. Functionally, binds cholesterol and may regulate the distribution and homeostasis of cholesterol in hair cells. May play a role in angiogenesis. This chain is Major intrinsically disordered NOTCH2-binding receptor 1-like, found in Danio rerio (Zebrafish).